The following is a 72-amino-acid chain: UPF0352 protein SO_2176 (72 aa).

Belongs to the UPF0352 family.

The sequence is that of UPF0352 protein SO_2176 from Shewanella oneidensis (strain ATCC 700550 / JCM 31522 / CIP 106686 / LMG 19005 / NCIMB 14063 / MR-1).